An 80-amino-acid chain; its full sequence is Exodeoxyribonuclease 7 small subunit (80 aa).

The protein belongs to the XseB family. In terms of assembly, heterooligomer composed of large and small subunits.

The protein localises to the cytoplasm. It catalyses the reaction Exonucleolytic cleavage in either 5'- to 3'- or 3'- to 5'-direction to yield nucleoside 5'-phosphates.. In terms of biological role, bidirectionally degrades single-stranded DNA into large acid-insoluble oligonucleotides, which are then degraded further into small acid-soluble oligonucleotides. The sequence is that of Exodeoxyribonuclease 7 small subunit from Photobacterium profundum (strain SS9).